Consider the following 411-residue polypeptide: Keratin, type I cytoskeletal 12 (411 aa).

The interval 1–42 (DHDYEFPGIQAFAGLGMGFGGSPGGGSLYLPSGNDGGLLSGS) is head. Positions 43–78 (EKETMQNLNDRLASYLDKVRALEDANAELENKIREW) are coil 1A. The IF rod domain occupies 43-359 (EKETMQNLND…RLLDGEAQGD (317 aa)). The tract at residues 83 to 101 (GHGHGDCGPQHDYSKYHPL) is linker 1. Positions 102-193 (IEDLRNKIIS…KNHEEELQSC (92 aa)) are coil 1B. The interval 194 to 216 (RAGGPGEVSVEMDAAPGVDLTRL) is linker 12. The tract at residues 217 to 354 (LNDMRAQYEA…IETYRRLLDG (138 aa)) is coil 2. The segment at 355-411 (EAQGDGLDESSAMTGSRSQAQSIDSSKDPSKTRKIKTIVQEVVNGEVVSSQVQEIQN) is tail. The disordered stretch occupies residues 356-387 (AQGDGLDESSAMTGSRSQAQSIDSSKDPSKTR). Polar residues predominate over residues 365–378 (SAMTGSRSQAQSID).

Belongs to the intermediate filament family. As to quaternary structure, heterotetramer of two type I and two type II keratins. Keratin-3 associates with keratin-12. Cornea specific. Associated mainly with all layers of the central corneal epithelium and also found in the suprabasal limbal epithelium.

In terms of biological role, involved in corneal epithelium organization, integrity and corneal keratin expression. The polypeptide is Keratin, type I cytoskeletal 12 (KRT12) (Oryctolagus cuniculus (Rabbit)).